The sequence spans 246 residues: Type III pantothenate kinase (246 aa).

An ATP-binding site is contributed by 6 to 13 (DVGNTHSV). 103–106 (GADR) is a binding site for substrate. The active-site Proton acceptor is Asp105. Residue Asp125 coordinates K(+). Thr128 is a binding site for ATP. Thr179 serves as a coordination point for substrate.

It belongs to the type III pantothenate kinase family. As to quaternary structure, homodimer. NH4(+) serves as cofactor. Requires K(+) as cofactor.

Its subcellular location is the cytoplasm. It carries out the reaction (R)-pantothenate + ATP = (R)-4'-phosphopantothenate + ADP + H(+). It participates in cofactor biosynthesis; coenzyme A biosynthesis; CoA from (R)-pantothenate: step 1/5. In terms of biological role, catalyzes the phosphorylation of pantothenate (Pan), the first step in CoA biosynthesis. The sequence is that of Type III pantothenate kinase from Thermotoga sp. (strain RQ2).